Consider the following 177-residue polypeptide: ATP synthase subunit delta (177 aa).

Belongs to the ATPase delta chain family. F-type ATPases have 2 components, F(1) - the catalytic core - and F(0) - the membrane proton channel. F(1) has five subunits: alpha(3), beta(3), gamma(1), delta(1), epsilon(1). F(0) has three main subunits: a(1), b(2) and c(10-14). The alpha and beta chains form an alternating ring which encloses part of the gamma chain. F(1) is attached to F(0) by a central stalk formed by the gamma and epsilon chains, while a peripheral stalk is formed by the delta and b chains.

Its subcellular location is the cell inner membrane. In terms of biological role, f(1)F(0) ATP synthase produces ATP from ADP in the presence of a proton or sodium gradient. F-type ATPases consist of two structural domains, F(1) containing the extramembraneous catalytic core and F(0) containing the membrane proton channel, linked together by a central stalk and a peripheral stalk. During catalysis, ATP synthesis in the catalytic domain of F(1) is coupled via a rotary mechanism of the central stalk subunits to proton translocation. This protein is part of the stalk that links CF(0) to CF(1). It either transmits conformational changes from CF(0) to CF(1) or is implicated in proton conduction. This Idiomarina loihiensis (strain ATCC BAA-735 / DSM 15497 / L2-TR) protein is ATP synthase subunit delta.